Here is a 314-residue protein sequence, read N- to C-terminus: MITRMKNWPCLLKRFSIQQFHQFTHLSGRLERAPQSGKSSRDPYLVTVVQGRSKKPRFPGERSNQRFGEDSWFVSSTPLAEVMGVADGVGGWRDLGVDAGRFAKELMSCCSGQTQLSDFDGRSPRNLLIAGFQELSHREQPVVGSSTACLATMHRKDCTLYTANLGDSGFLVVRNGRVLHRSVEQTHDFNTPYQLTVPPEDRKESYYCDKPEMAVSTRHSLLPGDLVLLATDGLFDNMPESTLLSILNGLKERGERDLLEGASRVVEKARELSLNASFQSPFAIKARQHNVSYSGGGKPDDITLILSSVEVPSV.

The PPM-type phosphatase domain occupies 43–309 (PYLVTVVQGR…DDITLILSSV (267 aa)). Mn(2+)-binding residues include aspartate 87, glycine 88, and aspartate 232.

The protein belongs to the PP2C family. The cofactor is Mg(2+). It depends on Mn(2+) as a cofactor.

The catalysed reaction is O-phospho-L-seryl-[protein] + H2O = L-seryl-[protein] + phosphate. The enzyme catalyses O-phospho-L-threonyl-[protein] + H2O = L-threonyl-[protein] + phosphate. This is Protein phosphatase PTC7 homolog fig from Drosophila simulans (Fruit fly).